The sequence spans 118 residues: Small ribosomal subunit protein bS6 (118 aa).

Belongs to the bacterial ribosomal protein bS6 family.

Binds together with bS18 to 16S ribosomal RNA. This Saccharopolyspora erythraea (strain ATCC 11635 / DSM 40517 / JCM 4748 / NBRC 13426 / NCIMB 8594 / NRRL 2338) protein is Small ribosomal subunit protein bS6.